The sequence spans 245 residues: NLP effector protein Pc118551 (245 aa).

A signal peptide spans 1-19 (MNLRAFLLSAVAALVAVQA). Residues 121–127 (QRRHLWE) carry the Hepta-peptide GHRHDWE motif motif. N-linked (GlcNAc...) asparagine glycosylation is present at Asn140.

It belongs to the Necrosis inducing protein (NPP1) family.

The protein localises to the secreted. Secreted effector that contributes strongly to virulence during infection by P.capsici. The protein is NLP effector protein Pc118551 of Phytophthora capsici.